The chain runs to 163 residues: ATP synthase subunit b (163 aa).

Residues 10–29 (ALYQLLAFSVLLFFLSKFAL) form a helical membrane-spanning segment.

The protein belongs to the ATPase B chain family. As to quaternary structure, F-type ATPases have 2 components, F(1) - the catalytic core - and F(0) - the membrane proton channel. F(1) has five subunits: alpha(3), beta(3), gamma(1), delta(1), epsilon(1). F(0) has three main subunits: a(1), b(2) and c(10-14). The alpha and beta chains form an alternating ring which encloses part of the gamma chain. F(1) is attached to F(0) by a central stalk formed by the gamma and epsilon chains, while a peripheral stalk is formed by the delta and b chains.

Its subcellular location is the cell membrane. Its function is as follows. F(1)F(0) ATP synthase produces ATP from ADP in the presence of a proton or sodium gradient. F-type ATPases consist of two structural domains, F(1) containing the extramembraneous catalytic core and F(0) containing the membrane proton channel, linked together by a central stalk and a peripheral stalk. During catalysis, ATP synthesis in the catalytic domain of F(1) is coupled via a rotary mechanism of the central stalk subunits to proton translocation. Component of the F(0) channel, it forms part of the peripheral stalk, linking F(1) to F(0). This Alkalihalophilus pseudofirmus (strain ATCC BAA-2126 / JCM 17055 / OF4) (Bacillus pseudofirmus) protein is ATP synthase subunit b.